The following is a 93-amino-acid chain: Conotoxin Mr105 (93 aa).

An N-terminal signal peptide occupies residues 1–22 (MQRGAVLLGVVALLVLWPQAGA). The propeptide occupies 23-33 (ELYDVNDPDVR).

This sequence belongs to the F superfamily. In terms of processing, contains 4 disulfide bonds. As to expression, expressed by the venom duct.

Its subcellular location is the secreted. The sequence is that of Conotoxin Mr105 from Conus marmoreus (Marble cone).